Reading from the N-terminus, the 571-residue chain is Carboxylesterase 3 (571 aa).

The signal sequence occupies residues 1-26; it reads MERAVRVESGVLVGVVCLLLACPATA. Residues Cys-97 and Cys-124 are joined by a disulfide bond. An N-linked (GlcNAc...) asparagine glycan is attached at Asn-105. The Acyl-ester intermediate role is filled by Ser-229. The cysteines at positions 281 and 292 are disulfide-linked. Active-site charge relay system residues include Glu-347 and His-460. A Prevents secretion from ER motif is present at residues 568–571; that stretch reads QEDL.

Belongs to the type-B carboxylesterase/lipase family. In terms of processing, N-glycosylated. As to expression, expressed in liver, colon and small intestine.

It localises to the endoplasmic reticulum lumen. The catalysed reaction is a carboxylic ester + H2O = an alcohol + a carboxylate + H(+). Involved in the detoxification of xenobiotics and in the activation of ester and amide prodrugs. Shows low catalytic efficiency for hydrolysis of CPT-11 (7-ethyl-10-[4-(1-piperidino)-1-piperidino]-carbonyloxycamptothecin), a prodrug for camptothecin used in cancer therapeutics. This chain is Carboxylesterase 3 (CES3), found in Homo sapiens (Human).